A 514-amino-acid chain; its full sequence is Ribonuclease Y (514 aa).

The helical transmembrane segment at 2 to 22 (EDLIVAIVVGAFSSAISIFVV) threads the bilayer. The KH domain maps to 204 to 268 (LINNIPLNDE…VATKTIRELL (65 aa)). Residues 330 to 423 (ALAHTLEVAH…VCAADALSAA (94 aa)) form the HD domain.

The protein belongs to the RNase Y family.

The protein resides in the cell membrane. Functionally, endoribonuclease that initiates mRNA decay. This Aliarcobacter butzleri (strain RM4018) (Arcobacter butzleri) protein is Ribonuclease Y.